A 72-amino-acid chain; its full sequence is Probable neurotoxin pcD-996 (72 aa).

Residues 1–19 (MNYLVMISFALLLVIGVES) form the signal peptide. The LCN-type CS-alpha/beta domain maps to 21–72 (RDGYFVEPDNCLVYCMPSPEICDRGCKRYGATSGFCKEFSKGENFCWCKGLR). 3 cysteine pairs are disulfide-bonded: C35–C56, C42–C66, and C46–C68. Residue R72 is a propeptide, removed by a carboxypeptidase.

The protein belongs to the long (3 C-C) scorpion toxin superfamily. In terms of tissue distribution, expressed by the venom gland.

Its subcellular location is the secreted. This chain is Probable neurotoxin pcD-996, found in Androctonus australis (Sahara scorpion).